Consider the following 568-residue polypeptide: MEPLQQQQQQQQQKQPQQPLLQMDAREKQGPQTRESQFLYASKLGTQPALLSITPGRPSGSSVLGPLARVPPATPVARMSEQSNVNSEPEEEEGGLEDEDGDDDVAEVAEKEAQAASKYFHMQKVTRQEPRATPMSSLLPVPGLSPQGQQTKEDHTKDASKAPPSVPTAGQPSWSLDEQLKQNGALAWSDDADGGRGREISRDFAKLYELDGDPERKEFLDDLFIFMQKRGTPINRIPIMAKQILDLYMLYKLVTEKGGLVEIINKKIWREITKGLNLPTSITSAAFTLRTQYMKYLYAYECEKKALSSPAELQAAIDGNRREGRRPSYSSSLFGYSPAAAAAAAAAAAAAAASAASAGTPALLSSPKIRFSILGLGSSSGTSASSPRIPPASTLRKGDGVPVPVPNRLAVSGTLAGQQAGNRPGPLEHLRERLESGEPPEKKASRLSEEEQRLVQQAFQRNLFSMARQLPMKIRINGREDRAEPSAPALNLTTSNIGSINMSVDIDGTTYTGVLFAQKPVVHLIAGSTPQSIGSSASSSNSSSSHCSPSPTSSRGTPSAEPSTSWSL.

N-acetylmethionine is present on M1. The span at 1 to 22 (MEPLQQQQQQQQQKQPQQPLLQ) shows a compositional bias: low complexity. The segment at 1–174 (MEPLQQQQQQ…SVPTAGQPSW (174 aa)) is disordered. A Phosphoserine modification is found at S87. The segment covering 88–107 (EPEEEEGGLEDEDGDDDVAE) has biased composition (acidic residues). Over residues 151–160 (TKEDHTKDAS) the composition is skewed to basic and acidic residues. The segment at 201–374 (SRDFAKLYEL…SSPKIRFSIL (174 aa)) is interaction with RB1. Residues 213–305 (DPERKEFLDD…YLYAYECEKK (93 aa)) form the ARID domain. S309 carries the phosphoserine modification. The residue at position 370 (R370) is an Asymmetric dimethylarginine. A disordered region spans residues 378–403 (SSSGTSASSPRIPPASTLRKGDGVPV). The REKLES domain maps to 425–522 (GPLEHLRERL…GVLFAQKPVV (98 aa)). The segment at 495–518 (SNIGSINMSVDIDGTTYTGVLFAQ) is interaction with ARID3A. Positions 529-559 (TPQSIGSSASSSNSSSSHCSPSPTSSRGTPS) are enriched in low complexity. A disordered region spans residues 529–568 (TPQSIGSSASSSNSSSSHCSPSPTSSRGTPSAEPSTSWSL).

As to quaternary structure, heterodimer with ARID3A. Interacts with unphosphorylated RB1. As to expression, expressed at high levels in testis. Also expressed in prostate, thyroid and thymus.

It localises to the nucleus. In terms of biological role, transcription factor involved in the production of cranial mesenchymal tissues. Favors nuclear targeting of ARID3A. This Mus musculus (Mouse) protein is AT-rich interactive domain-containing protein 3B (Arid3b).